A 362-amino-acid polypeptide reads, in one-letter code: Serine/threonine-protein kinase SRK2E (362 aa).

Residues S7, S18, S29, and S43 each carry the phosphoserine; by autocatalysis modification. Residues 21–277 (YELVKDIGSG…IPEIRNHEWF (257 aa)) enclose the Protein kinase domain. Residue 27–35 (IGSGNFGVA) participates in ATP binding. K50 contributes to the ATP binding site. The active-site Proton acceptor is the D140. The activation loop stretch occupies residues 160 to 186 (DFGYSKSSVLHSQPKSTVGTPAYIAPE). The residue at position 175 (S175) is a Phosphoserine. A domain I; osmotic stress response, required for the kinase activity region spans residues 283–318 (ADLMNDNTMTTQFDESDQPGQSIEEIMQIIAEATVP). The tract at residues 319–362 (PAGTQNLNHYLTGSLDIDDDMEEDLESDLDDLDIDSSGEIVYAM) is domain II; ABA response and ABI1 binding.

The protein belongs to the protein kinase superfamily. Ser/Thr protein kinase family. In terms of assembly, interacts with ABI1, PP2CA and SLAC1. Interacts with B'ALPHA, B'BETA, B'DELTA, PP2AA2, PP2AA3, PP2A1 and PP2A2. Associates with MAPKKK18 within the nucleus. Interacts with I-2, TOPP1 and TOPP2. Interacts with ABI2. In terms of processing, autophosphorylation on residues Ser-7, Ser-18, Ser-29, Ser-43, Ser-175 and/or Thr-176. Only the phosphorylation of Ser-175 is crucial for the kinase activity. The phosphorylation of Ser-43 may repress the ABA signaling pathway in absence of ABA. In terms of tissue distribution, expressed in seedlings, leaves, flowers, stems, and roots, but restricted to guard cells and vascular tissue.

The protein resides in the nucleus. The catalysed reaction is L-seryl-[protein] + ATP = O-phospho-L-seryl-[protein] + ADP + H(+). It catalyses the reaction L-threonyl-[protein] + ATP = O-phospho-L-threonyl-[protein] + ADP + H(+). Its activity is regulated as follows. Kinase activity enhanced by ABA and low humidity. Repressed by PP2CA independently of its phosphatase activity. Probably inactivated by ABI1. Repressed by TOPP1. Negatively regulated by ABI2. In terms of biological role, activator of the abscisic acid (ABA) signaling pathway that regulates numerous ABA responses, such as stomata closure in response to drought, darkness, high CO(2), plant pathogens, or decreases in atmospheric relative humidity (RH). Involved in the resistance to drought by avoiding water loss. Required for the stomata closure mediated by pathogen-associated molecular pattern (PAMPs) (e.g. flg22 and LPS) of pathogenic bacteria such as P.syringae pv. tomato (Pst) and E.coli O157:H7. As a plant defense process, stomata are closed transiently in order to limit invaders, but actively reopened by bacteria after a few hours; virulent strains (e.g. Pst DC3000) are more efficient than avirulent strains (e.g. Pst DC3000 AvrRpt2) in reopening stomata. Mediates the phosphorylation and activation of the S-type anion efflux channel SLAC1, and thus promotes stomata closure. Essential for stomatal closure in response to reactive oxygen species (ROS). Promotes MAPKKK18 activity upon abscisic acid (ABA) treatment. The chain is Serine/threonine-protein kinase SRK2E from Arabidopsis thaliana (Mouse-ear cress).